The following is a 232-amino-acid chain: Syntaxin-51 (232 aa).

Topologically, residues 1 to 208 are cytoplasmic; that stretch reads MASSSDSWMR…NKNMRSGCSC (208 aa). Residues 136-198 form the t-SNARE coiled-coil homology domain; sequence RQVMREQDEG…RRVQKSLAVM (63 aa). A helical; Anchor for type IV membrane protein transmembrane segment spans residues 209 to 229; that stretch reads MSMLLSVLGIVGLAVVIWMLV. Topologically, residues 230–232 are vesicular; that stretch reads KYM.

Belongs to the syntaxin family. In terms of assembly, interacts with VTI11 and either SYP21, or SYP22, or SYP61 in the prevacuolar compartment, or with VTI12 and SYP61 in the trans-Golgi network to form t-SNARE complexes. Expressed in root, leaf, stem, flower and silique.

Its subcellular location is the golgi apparatus. It is found in the trans-Golgi network membrane. The protein localises to the prevacuolar compartment membrane. Vesicle trafficking protein that functions in the secretory pathway. This Arabidopsis thaliana (Mouse-ear cress) protein is Syntaxin-51 (SYP51).